The primary structure comprises 114 residues: Reprimo-like protein (114 aa).

The chain crosses the membrane as a helical span at residues 61-81; the sequence is VVQIAVLCVLSLTVMFGIFFL.

Belongs to the reprimo family.

The protein localises to the membrane. This Danio rerio (Zebrafish) protein is Reprimo-like protein (rprml).